The following is a 260-amino-acid chain: Small ribosomal subunit protein eS1 (260 aa).

An N6-acetyllysine; alternate modification is found at K30. K30 is covalently cross-linked (Glycyl lysine isopeptide (Lys-Gly) (interchain with G-Cter in SUMO2); alternate). N6-acetyllysine is present on K52. Y151 is subject to ADP-ribosyltyrosine. The tract at residues H228 to V260 is disordered. A phosphoserine mark is found at S232 and S233. A compositionally biased stretch (basic and acidic residues) spans T238–G251. The residue at position 245 (K245) is an N6-acetyllysine; alternate. K245 is covalently cross-linked (Glycyl lysine isopeptide (Lys-Gly) (interchain with G-Cter in SUMO2); alternate). Y252 carries the phosphotyrosine modification. S259 carries the phosphoserine modification.

Belongs to the eukaryotic ribosomal protein eS1 family. As to quaternary structure, component of the small ribosomal subunit. Mature ribosomes consist of a small (40S) and a large (60S) subunit. The 40S subunit contains about 33 different proteins and 1 molecule of RNA (18S). The 60S subunit contains about 49 different proteins and 3 molecules of RNA (28S, 5.8S and 5S). Identified in a IGF2BP1-dependent mRNP granule complex containing untranslated mRNAs. Binds with high affinity to IPO4. Interacts with DDIT3. Part of the small subunit (SSU) processome, composed of more than 70 proteins and the RNA chaperone small nucleolar RNA (snoRNA) U3. In terms of processing, ADP-ribosylated at Tyr-151 by PARP1 in presence of HPF1.

It is found in the cytoplasm. Its subcellular location is the nucleus. The protein localises to the nucleolus. Its function is as follows. Component of the small ribosomal subunit. The ribosome is a large ribonucleoprotein complex responsible for the synthesis of proteins in the cell. Part of the small subunit (SSU) processome, first precursor of the small eukaryotic ribosomal subunit. During the assembly of the SSU processome in the nucleolus, many ribosome biogenesis factors, an RNA chaperone and ribosomal proteins associate with the nascent pre-rRNA and work in concert to generate RNA folding, modifications, rearrangements and cleavage as well as targeted degradation of pre-ribosomal RNA by the RNA exosome. May play a role during erythropoiesis through regulation of transcription factor DDIT3. The chain is Small ribosomal subunit protein eS1 from Felis catus (Cat).